Reading from the N-terminus, the 277-residue chain is Bifunctional protein FolD (277 aa).

Residues 160-162 (GAS), S185, and I226 each bind NADP(+).

It belongs to the tetrahydrofolate dehydrogenase/cyclohydrolase family. As to quaternary structure, homodimer.

The catalysed reaction is (6R)-5,10-methylene-5,6,7,8-tetrahydrofolate + NADP(+) = (6R)-5,10-methenyltetrahydrofolate + NADPH. It catalyses the reaction (6R)-5,10-methenyltetrahydrofolate + H2O = (6R)-10-formyltetrahydrofolate + H(+). It functions in the pathway one-carbon metabolism; tetrahydrofolate interconversion. Its function is as follows. Catalyzes the oxidation of 5,10-methylenetetrahydrofolate to 5,10-methenyltetrahydrofolate and then the hydrolysis of 5,10-methenyltetrahydrofolate to 10-formyltetrahydrofolate. This Ruthia magnifica subsp. Calyptogena magnifica protein is Bifunctional protein FolD.